A 144-amino-acid chain; its full sequence is Augurin-B (144 aa).

Positions 1 to 18 are cleaved as a signal peptide; it reads MSLHSLCVPTILLISVLS. Positions 19–68 are excised as a propeptide; sequence ICLSSGGSSDSKLHRILIKRDAKEIESRPKAYISVQQSKAKEFLSGLHRT. Residues 109–144 are disordered; that stretch reads RSNDQGRQHHHDENAPMSQQDPRYNRHGANVNYDYY. Over residues 112 to 122 the composition is skewed to basic and acidic residues; the sequence is DQGRQHHHDEN.

The protein belongs to the augurin family.

Its subcellular location is the secreted. It is found in the cytoplasm. The protein localises to the apical cell membrane. In terms of biological role, probable hormone. Required for the proper formation of the central nervous system by attenuating cell proliferation during development. In Danio rerio (Zebrafish), this protein is Augurin-B.